Here is a 326-residue protein sequence, read N- to C-terminus: Metal-binding protein YtgA (326 aa).

The signal sequence occupies residues 1–21 (MFFLHVRKYKHVIGGLLCLAG). Fe(2+) is bound by residues His-75, His-141, His-207, and Asp-299.

This sequence belongs to the bacterial solute-binding protein 9 family. As to quaternary structure, monomer.

The protein localises to the periplasm. Its function is as follows. Part of the ATP-binding cassette (ABC) transport system YtgABCD involved in metal import. Binds Fe(2+), Mn(2+) and Ni(2+), with a preference for Fe(2+) and delivers them to the membrane permease for translocation into the cytoplasm. The chain is Metal-binding protein YtgA from Chlamydia muridarum (strain MoPn / Nigg).